We begin with the raw amino-acid sequence, 172 residues long: Transcriptional regulator CdrL (172 aa).

Positions 72 to 113 are disordered; the sequence is SPSAVEEVRTTPASGGRADAEEPGDDGETDAEHADTSATGDE. Residues 116-160 form a DZANK-type zinc finger; the sequence is CSQCGAELSADHVYCPNCGGKATHRVFCECGDEIRADWAFCPRCG.

The protein belongs to the CdrL family.

It localises to the cytoplasm. Functionally, transcriptional regulator involved in the control of cell division. The protein is Transcriptional regulator CdrL of Halobacterium salinarum (strain ATCC 29341 / DSM 671 / R1).